We begin with the raw amino-acid sequence, 273 residues long: Large ribosomal subunit protein uL2 (273 aa).

The disordered stretch occupies residues 228 to 273; the sequence is VDHPHGGGEGKTSGGRHPVTPWGFPTKGKKTRKNKRTSKFIVKKRK. Positions 254–273 are enriched in basic residues; that stretch reads KGKKTRKNKRTSKFIVKKRK.

It belongs to the universal ribosomal protein uL2 family. In terms of assembly, part of the 50S ribosomal subunit. Forms a bridge to the 30S subunit in the 70S ribosome.

Its function is as follows. One of the primary rRNA binding proteins. Required for association of the 30S and 50S subunits to form the 70S ribosome, for tRNA binding and peptide bond formation. It has been suggested to have peptidyltransferase activity; this is somewhat controversial. Makes several contacts with the 16S rRNA in the 70S ribosome. The chain is Large ribosomal subunit protein uL2 from Rickettsia akari (strain Hartford).